Reading from the N-terminus, the 363-residue chain is MNKLALYCRPGFEKEVAAEIADQASHLGVFGFARVQDNSGYVIFECYQPDEADRLARDIPFNRLIFARQMMVISGLLEDLDPADRISPIVTAFEELSQQVNFAQSSELFVETADTNEAKELSTFCRKFTVPLRQALKKQGWLSAKATQKSGQFLHCFFVKPNCCYVGYSYVDNHSPHFMGIPRLKFPADAPSRSTLKLEEAILTFIPRKEENKRLNENMIGVDLGACPGGWTYQLVKRGLFVYAVDHGKMAASLHDTGRIEHCAEDGFKFQPPKRKKVDWLVCDMVEQPSRISLLIGKWLLNGWCRETIFNLKLPMKKRYQEVILCLENLAVMLAEQNLNFEIQAKHLYHDREEITVHIALKP.

S-adenosyl-L-methionine contacts are provided by residues S194, 227–230, D246, D266, and D284; that span reads CPGG. K313 (proton acceptor) is an active-site residue.

Belongs to the class I-like SAM-binding methyltransferase superfamily. RNA methyltransferase RlmE family. RlmM subfamily. As to quaternary structure, monomer.

The protein resides in the cytoplasm. The catalysed reaction is cytidine(2498) in 23S rRNA + S-adenosyl-L-methionine = 2'-O-methylcytidine(2498) in 23S rRNA + S-adenosyl-L-homocysteine + H(+). In terms of biological role, catalyzes the 2'-O-methylation at nucleotide C2498 in 23S rRNA. This chain is Ribosomal RNA large subunit methyltransferase M, found in Haemophilus influenzae (strain PittEE).